A 545-amino-acid chain; its full sequence is Chaperonin GroEL 3 (545 aa).

ATP is bound by residues 30 to 33 (TLGP), K51, 87 to 91 (DGTTT), G415, and D496.

Belongs to the chaperonin (HSP60) family. In terms of assembly, forms a cylinder of 14 subunits composed of two heptameric rings stacked back-to-back. Interacts with the co-chaperonin GroES.

Its subcellular location is the cytoplasm. It carries out the reaction ATP + H2O + a folded polypeptide = ADP + phosphate + an unfolded polypeptide.. Its function is as follows. Together with its co-chaperonin GroES, plays an essential role in assisting protein folding. The GroEL-GroES system forms a nano-cage that allows encapsulation of the non-native substrate proteins and provides a physical environment optimized to promote and accelerate protein folding. In Nitrobacter hamburgensis (strain DSM 10229 / NCIMB 13809 / X14), this protein is Chaperonin GroEL 3.